Reading from the N-terminus, the 528-residue chain is Probable methylmalonate-semialdehyde/malonate-semialdehyde dehydrogenase [acylating], mitochondrial (528 aa).

The transit peptide at 1–26 (MLSFKFAKSASKVIGNRNFHSSSASL) directs the protein to the mitochondrion. NAD(+)-binding residues include F175, K199, E202, and R203. The active-site Nucleophile is the C307. E408 contributes to the NAD(+) binding site.

Belongs to the aldehyde dehydrogenase family. In terms of assembly, homotetramer.

It is found in the mitochondrion. It carries out the reaction 2-methyl-3-oxopropanoate + NAD(+) + CoA + H2O = propanoyl-CoA + hydrogencarbonate + NADH + H(+). The catalysed reaction is 3-oxopropanoate + NAD(+) + CoA + H2O = hydrogencarbonate + acetyl-CoA + NADH + H(+). Functionally, probable malonate and methylmalonate semialdehyde dehydrogenase involved in the catabolism of valine, thymine, and compounds catabolized by way of beta-alanine, including uracil and cytidine. This Dictyostelium discoideum (Social amoeba) protein is Probable methylmalonate-semialdehyde/malonate-semialdehyde dehydrogenase [acylating], mitochondrial (mmsdh).